The following is a 340-amino-acid chain: Biotin synthase (340 aa).

Residues 45-272 (NAVQVSTLLS…ASYVRLSAGR (228 aa)) enclose the Radical SAM core domain. [4Fe-4S] cluster is bound by residues Cys60, Cys64, and Cys67. [2Fe-2S] cluster-binding residues include Cys104, Cys135, Cys195, and Arg267.

Belongs to the radical SAM superfamily. Biotin synthase family. In terms of assembly, homodimer. It depends on [4Fe-4S] cluster as a cofactor. The cofactor is [2Fe-2S] cluster.

It carries out the reaction (4R,5S)-dethiobiotin + (sulfur carrier)-SH + 2 reduced [2Fe-2S]-[ferredoxin] + 2 S-adenosyl-L-methionine = (sulfur carrier)-H + biotin + 2 5'-deoxyadenosine + 2 L-methionine + 2 oxidized [2Fe-2S]-[ferredoxin]. Its pathway is cofactor biosynthesis; biotin biosynthesis; biotin from 7,8-diaminononanoate: step 2/2. Functionally, catalyzes the conversion of dethiobiotin (DTB) to biotin by the insertion of a sulfur atom into dethiobiotin via a radical-based mechanism. The sequence is that of Biotin synthase from Thioalkalivibrio sulfidiphilus (strain HL-EbGR7).